Reading from the N-terminus, the 381-residue chain is 2-epi-5-epi-valiolone synthase (381 aa).

Residues Asp-50, 81 to 84, 114 to 118, 138 to 139, Lys-151, Lys-160, and 178 to 181 each bind NAD(+); these read EEAK, GIVLD, TS, and FLDT. Lys-151 is an active-site residue. Glu-193, His-264, and His-280 together coordinate a divalent metal cation.

Belongs to the sugar phosphate cyclases superfamily. EEVS family. Requires NAD(+) as cofactor. It depends on Co(2+) as a cofactor.

The catalysed reaction is D-sedoheptulose 7-phosphate = 2-epi-5-epi-valiolone + phosphate. Its pathway is antibiotic biosynthesis. Catalyzes the cyclization of D-sedoheptulose 7-phosphate to 2-epi-5-epi-valiolone. Involved in cetoniacytone A biosynthesis. This Actinomyces sp protein is 2-epi-5-epi-valiolone synthase.